Reading from the N-terminus, the 461-residue chain is Carboxypeptidase Rv3627c (461 aa).

The first 28 residues, 1–28 (MGPTRWRKSTHVVVGAAVLAFVAVVVAA), serve as a signal peptide directing secretion. S114 functions as the Acyl-ester intermediate in the catalytic mechanism. The active-site Proton acceptor is K117. S295 is an active-site residue.

Belongs to the peptidase S13 family.

Carboxypeptidase that cleaves terminal D-alanine from peptidoglycan in the mycobacterial cell wall. May cleave L-Lys-D-Ala and/or D-Ala-D-Ala peptide bonds. Exerts important effects on mycobacterial cell morphology and cell division. The polypeptide is Carboxypeptidase Rv3627c (Mycobacterium tuberculosis (strain ATCC 25618 / H37Rv)).